A 304-amino-acid chain; its full sequence is Nod factor export ATP-binding protein I (304 aa).

The 231-residue stretch at 6–236 (IDFRNVEKRY…EIGCDVIEIY (231 aa)) folds into the ABC transporter domain. Residue 38–45 (GPNGAGKT) participates in ATP binding.

The protein belongs to the ABC transporter superfamily. Lipooligosaccharide exporter (TC 3.A.1.102) family. As to quaternary structure, the complex is composed of two ATP-binding proteins (NodI) and two transmembrane proteins (NodJ).

The protein resides in the cell inner membrane. Functionally, part of the ABC transporter complex NodIJ involved in the export of the nodulation factors (Nod factors), the bacterial signal molecules that induce symbiosis and subsequent nodulation induction. Nod factors are LCO (lipo-chitin oligosaccharide), a modified beta-1,4-linked N-acetylglucosamine oligosaccharide. This subunit is responsible for energy coupling to the transport system. The sequence is that of Nod factor export ATP-binding protein I from Burkholderia orbicola (strain AU 1054).